The primary structure comprises 468 residues: Sorting and assembly machinery component 50 homolog A (468 aa).

The disordered stretch occupies residues 1–24; that stretch reads MGTVHARSLDPLPMNGPDFGSPDD. Residues 44 to 124 enclose the POTRA domain; the sequence is VVVQRVHFEG…LDVTFEVTEL (81 aa).

It belongs to the SAM50/omp85 family. As to quaternary structure, associates with the mitochondrial contact site and cristae organizing system (MICOS) complex (also known as MINOS or MitOS complex).

The protein localises to the mitochondrion outer membrane. May play a role in the maintenance of the structure of mitochondrial cristae. The polypeptide is Sorting and assembly machinery component 50 homolog A (samm50-a) (Xenopus laevis (African clawed frog)).